Consider the following 201-residue polypeptide: Ras-related protein Rab-1B (201 aa).

The residue at position 1 (methionine 1) is an N-acetylmethionine. Residues serine 17, glycine 18, valine 19, glycine 20, lysine 21, serine 22, cysteine 23, tyrosine 33, threonine 34, glutamate 35, serine 36, serine 39, and threonine 40 each coordinate GTP. Serine 22 provides a ligand contact to Mg(2+). Residues 30-45 (DDTYTESYISTIGVDF) carry the Switch 1 motif. Residues threonine 40 and aspartate 63 each coordinate Mg(2+). Residues 64–83 (TAGQERGRTITSSYYRGAHG) form a switch 2 region; required for interaction with REP1/CHM region. The Switch 2 motif lies at 65 to 80 (AGQERGRTITSSYYRG). Glycine 66, asparagine 121, lysine 122, aspartate 124, serine 151, alanine 152, and lysine 153 together coordinate GTP. A disordered region spans residues 173–201 (MGPGAASGGERPNLKIDSTPVKQAGGGCC). 2 S-geranylgeranyl cysteine lipidation sites follow: cysteine 200 and cysteine 201. A Cysteine methyl ester modification is found at cysteine 201.

It belongs to the small GTPase superfamily. Rab family. In terms of assembly, interacts with MICAL1 and MICAL2. Interacts (in GTP-bound form) with MICALCL, MICAL1 and MILCAL3. Interacts with GDI1; the interaction requires the GDP-bound state. Interacts with CHM/REP1; the interaction requires the GDP-bound form and is necessary for prenylation by GGTase II. Interacts with RabGAP TBC1D20. Interacts (in GDP-bound form) with lipid phosphatase MTMR6 (via GRAM domain); the interaction regulates MTMR6 recruitment to the endoplasmic reticulum-Golgi intermediate compartment. Interacts (in GDP-bound form) with lipid phosphatase MTMR7. Mg(2+) serves as cofactor. Post-translationally, prenylated; by GGTase II, only after interaction of the substrate with Rab escort protein 1 (REP1).

It localises to the cytoplasm. The protein resides in the membrane. The protein localises to the preautophagosomal structure membrane. Its subcellular location is the perinuclear region. The catalysed reaction is GTP + H2O = GDP + phosphate + H(+). Its activity is regulated as follows. Regulated by guanine nucleotide exchange factors (GEFs) which promote the exchange of bound GDP for free GTP. Regulated by GTPase activating proteins (GAPs) including TBC1D20 which increases the GTP hydrolysis activity. Inhibited by GDP dissociation inhibitors (GDIs). Functionally, the small GTPases Rab are key regulators of intracellular membrane trafficking, from the formation of transport vesicles to their fusion with membranes. Rabs cycle between an inactive GDP-bound form and an active GTP-bound form that is able to recruit to membranes different set of downstream effectors directly responsible for vesicle formation, movement, tethering and fusion. Plays a role in the initial events of the autophagic vacuole development which take place at specialized regions of the endoplasmic reticulum. Regulates vesicular transport between the endoplasmic reticulum and successive Golgi compartments. Required to modulate the compacted morphology of the Golgi. Promotes the recruitment of lipid phosphatase MTMR6 to the endoplasmic reticulum-Golgi intermediate compartment. The chain is Ras-related protein Rab-1B (RAB1B) from Sus scrofa (Pig).